A 1180-amino-acid chain; its full sequence is Phosphatidylinositol 4-kinase (1180 aa).

In terms of domain architecture, PIK helical spans 1-206 (MNKISDTIII…SVYLHSPSTS (206 aa)). Disordered regions lie at residues 15-84 (NEDE…KHKE), 257-327 (ENDH…ENDN), 355-391 (TSPI…NNIN), 768-799 (TISN…IPHS), and 832-894 (AISP…SPFG). Residues 38-74 (NNNNNNILTNVNNNKNNTITSSGGSDSSSSSSNNNNN) are compositionally biased toward low complexity. Over residues 75–84 (KIKKSKKHKE) the composition is skewed to basic residues. Over residues 257 to 270 (ENDHHIENDPKKDI) the composition is skewed to basic and acidic residues. Low complexity-rich tracts occupy residues 271–325 (NSNN…SGEN), 364–391 (NNNN…NNIN), 768–793 (TISN…PTLP), and 835–879 (PPSQ…SPTN). Positions 895–1164 (ESWQEKIERY…LISYSIDHFK (270 aa)) constitute a PI3K/PI4K catalytic domain. The tract at residues 901–907 (IERYKKI) is G-loop. Residues 1030–1038 (QIKDRHNGN) form a catalytic loop region. The interval 1049–1073 (HIDFGFILSNSPGNISFESAPFKLT) is activation loop.

Belongs to the PI3/PI4-kinase family. Type III PI4K subfamily.

It carries out the reaction a 1,2-diacyl-sn-glycero-3-phospho-(1D-myo-inositol) + ATP = a 1,2-diacyl-sn-glycero-3-phospho-(1D-myo-inositol 4-phosphate) + ADP + H(+). Functionally, acts on phosphatidylinositol (PtdIns) in the first committed step in the production of the second messenger inositol-1,4,5,-trisphosphate. The chain is Phosphatidylinositol 4-kinase (pikD) from Dictyostelium discoideum (Social amoeba).